The following is a 291-amino-acid chain: MAGMKEIRGKIKSVQNTRKITKAMEMVAASKMRRAQERMRAARPYADKVRAIAAHMSRANPEYRHPFMVANDGAQTAGIILVTTDKGLCGGLNTNVLRATVQKFKELEEKGQKVEATAIGGKGLGFLNRFGAKVMSQVVHLGDTPHLDKLIGAVKTQLDLYSEGKLSAVYIAYTRFVNTMKQEAVIEQLLPLSSDHFEADDGTPATSWDYIYEPDAQAVVDELLVRYVEALVYQAVAENMASEQSARMVAMKAASDNAKTVISELQLVYNKSRQAAITKELSEIVGGAAAV.

Belongs to the ATPase gamma chain family. In terms of assembly, F-type ATPases have 2 components, CF(1) - the catalytic core - and CF(0) - the membrane proton channel. CF(1) has five subunits: alpha(3), beta(3), gamma(1), delta(1), epsilon(1). CF(0) has three main subunits: a, b and c.

It localises to the cell inner membrane. Its function is as follows. Produces ATP from ADP in the presence of a proton gradient across the membrane. The gamma chain is believed to be important in regulating ATPase activity and the flow of protons through the CF(0) complex. In Burkholderia cenocepacia (strain ATCC BAA-245 / DSM 16553 / LMG 16656 / NCTC 13227 / J2315 / CF5610) (Burkholderia cepacia (strain J2315)), this protein is ATP synthase gamma chain.